Consider the following 556-residue polypeptide: CTP synthase (556 aa).

The interval 1–266 is amidoligase domain; it reads MKYIFVTGGV…GKVVEDLLGL (266 aa). Ser12 contributes to the CTP binding site. UTP is bound at residue Ser12. Residue 13–18 coordinates ATP; it reads SLGKGV. Tyr53 provides a ligand contact to L-glutamine. ATP is bound at residue Asp70. Mg(2+)-binding residues include Asp70 and Glu140. Residues 147 to 149, 187 to 192, and Lys223 contribute to the CTP site; these read DIE and KTKPTQ. UTP contacts are provided by residues 187-192 and Lys223; that span reads KTKPTQ. Residues 291 to 544 enclose the Glutamine amidotransferase type-1 domain; sequence TIAIAGKYTE…VKAALRGQSS (254 aa). Gly356 is a binding site for L-glutamine. Catalysis depends on Cys383, which acts as the Nucleophile; for glutamine hydrolysis. L-glutamine-binding positions include 384–387, Glu407, and Arg467; that span reads LGMQ. Catalysis depends on residues His517 and Glu519.

The protein belongs to the CTP synthase family. In terms of assembly, homotetramer.

The enzyme catalyses UTP + L-glutamine + ATP + H2O = CTP + L-glutamate + ADP + phosphate + 2 H(+). The catalysed reaction is L-glutamine + H2O = L-glutamate + NH4(+). It catalyses the reaction UTP + NH4(+) + ATP = CTP + ADP + phosphate + 2 H(+). It participates in pyrimidine metabolism; CTP biosynthesis via de novo pathway; CTP from UDP: step 2/2. Its activity is regulated as follows. Allosterically activated by GTP, when glutamine is the substrate; GTP has no effect on the reaction when ammonia is the substrate. The allosteric effector GTP functions by stabilizing the protein conformation that binds the tetrahedral intermediate(s) formed during glutamine hydrolysis. Inhibited by the product CTP, via allosteric rather than competitive inhibition. In terms of biological role, catalyzes the ATP-dependent amination of UTP to CTP with either L-glutamine or ammonia as the source of nitrogen. Regulates intracellular CTP levels through interactions with the four ribonucleotide triphosphates. This is CTP synthase from Deinococcus deserti (strain DSM 17065 / CIP 109153 / LMG 22923 / VCD115).